A 960-amino-acid polypeptide reads, in one-letter code: UvrABC system protein A (960 aa).

G35–S42 contacts ATP. A C4-type zinc finger spans residues C270–C297. ABC transporter domains follow at residues F327–L605 and G625–K953. G657–S664 contacts ATP. Residues C756–C782 form a C4-type zinc finger.

It belongs to the ABC transporter superfamily. UvrA family. As to quaternary structure, forms a heterotetramer with UvrB during the search for lesions.

The protein localises to the cytoplasm. Its function is as follows. The UvrABC repair system catalyzes the recognition and processing of DNA lesions. UvrA is an ATPase and a DNA-binding protein. A damage recognition complex composed of 2 UvrA and 2 UvrB subunits scans DNA for abnormalities. When the presence of a lesion has been verified by UvrB, the UvrA molecules dissociate. The protein is UvrABC system protein A of Treponema pallidum (strain Nichols).